The sequence spans 263 residues: Tryptophan synthase alpha chain (263 aa).

Active-site proton acceptor residues include Glu-41 and Asp-52.

It belongs to the TrpA family. In terms of assembly, tetramer of two alpha and two beta chains.

The catalysed reaction is (1S,2R)-1-C-(indol-3-yl)glycerol 3-phosphate + L-serine = D-glyceraldehyde 3-phosphate + L-tryptophan + H2O. It functions in the pathway amino-acid biosynthesis; L-tryptophan biosynthesis; L-tryptophan from chorismate: step 5/5. Its function is as follows. The alpha subunit is responsible for the aldol cleavage of indoleglycerol phosphate to indole and glyceraldehyde 3-phosphate. The chain is Tryptophan synthase alpha chain from Geobacillus sp. (strain WCH70).